A 204-amino-acid polypeptide reads, in one-letter code: Guanylate kinase (204 aa).

Positions 16 to 196 constitute a Guanylate kinase-like domain; it reads AKVIIFSAPS…AKAHALKVIK (181 aa). 23-30 contributes to the ATP binding site; that stretch reads APSGSGKS.

It belongs to the guanylate kinase family.

The protein localises to the cytoplasm. It carries out the reaction GMP + ATP = GDP + ADP. Functionally, essential for recycling GMP and indirectly, cGMP. In Bacteroides fragilis (strain ATCC 25285 / DSM 2151 / CCUG 4856 / JCM 11019 / LMG 10263 / NCTC 9343 / Onslow / VPI 2553 / EN-2), this protein is Guanylate kinase.